The chain runs to 674 residues: Glutaminase kidney isoform, mitochondrial (674 aa).

A mitochondrion-targeting transit peptide spans 1–54 (MMRLRGSAMLRELLLRPPAAVGAVLRRAQPLGTLCRRPRGGSRPTAGLVAAARL). The segment at 56 to 123 (PWWGGGGRAK…PGETDAFGNS (68 aa)) is disordered. Residues 58–71 (WGGGGRAKGPGAGG) are compositionally biased toward gly residues. The segment covering 89 to 101 (PPQQQQQQQQQPG) has biased composition (low complexity). An N6-succinyllysine mark is found at lysine 135 and lysine 169. Position 291 (serine 291) interacts with substrate. Lysine 316 bears the N6-acetyllysine mark. Residues 320-327 (GLRFNKLF) form a highly mobile activation loop region. Substrate is bound by residues asparagine 340, glutamate 386, asparagine 393, tyrosine 419, tyrosine 471, and valine 489. ANK repeat units follow at residues 590–619 (DSRT…VNPF) and 624–653 (WNNT…QYTP). The segment at 652–674 (TPQGDSDDGKGNQTVHKNLDGLL) is disordered. Residue serine 657 is modified to Phosphoserine.

It belongs to the glutaminase family. As to quaternary structure, homotetramer, dimer of dimers. The tetramers can assemble into rod-like oligomers (in vitro), but the physiological significance of this is not clear. Interacts with RAF1 and MAP2K2. Interacts with ATCAY; the interaction is direct and may control GLS localization, negatively regulating its activity. Synthesized as a 74-kDa cytosolic precursor which is proteolytically processed by the mitochondrial-processing peptidase (MPP) via a 72-kDa intermediate to yield the mature mitochondrial 68- and 65-kDa subunits.

The protein localises to the mitochondrion. It is found in the cytoplasm. It localises to the cytosol. Its subcellular location is the mitochondrion matrix. The enzyme catalyses L-glutamine + H2O = L-glutamate + NH4(+). Its activity is regulated as follows. Isoform 1 and isoform 2 are activated by phosphate, due to increased affinity for glutamine. At phosphate concentrations above 10 mM, isoform 2 is more efficient than isoform 1. Functionally, catalyzes the first reaction in the primary pathway for the renal catabolism of glutamine. Plays a role in maintaining acid-base homeostasis. Regulates the levels of the neurotransmitter glutamate, the main excitatory neurotransmitter in the brain. The protein is Glutaminase kidney isoform, mitochondrial (Gls) of Mus musculus (Mouse).